Reading from the N-terminus, the 261-residue chain is Small ribosomal subunit protein uS3 (261 aa).

The region spanning 39–107 is the KH type-2 domain; that stretch reads VREYLKRKLA…PVHVSIEEIR (69 aa). The disordered stretch occupies residues 213–261; it reads QPVAEEPAADDRRPRRTPGRPDGDKPRTRTVKKVDGAADPAKRVRKAGA. The span at 221 to 254 shows a compositional bias: basic and acidic residues; the sequence is ADDRRPRRTPGRPDGDKPRTRTVKKVDGAADPAK.

This sequence belongs to the universal ribosomal protein uS3 family. In terms of assembly, part of the 30S ribosomal subunit. Forms a tight complex with proteins S10 and S14.

Its function is as follows. Binds the lower part of the 30S subunit head. Binds mRNA in the 70S ribosome, positioning it for translation. This chain is Small ribosomal subunit protein uS3, found in Dechloromonas aromatica (strain RCB).